We begin with the raw amino-acid sequence, 465 residues long: Ribosomal oxygenase 2 (465 aa).

Residues 139 to 271 enclose the JmjC domain; the sequence is QPQRYKDELW…NSWGDCLLDS (133 aa). The Fe cation site is built by histidine 179, aspartate 181, and histidine 240. Serine 309 is modified (phosphoserine).

The protein belongs to the ROX family. MINA53 subfamily. The cofactor is Fe(2+). As to expression, predominantly expressed in testis. Expressed at high levels in spleen, thymus, and colon, but barely detectable in brain, skeletal muscle, and seminal vesicle (at protein level).

It is found in the nucleus. The protein resides in the nucleolus. The catalysed reaction is L-histidyl-[ribosomal protein uL15] + 2-oxoglutarate + O2 = (3S)-3-hydroxy-L-histidyl-[ribosomal protein uL15] + succinate + CO2. The enzyme catalyses L-histidyl-[protein] + 2-oxoglutarate + O2 = (3S)-3-hydroxy-L-histidyl-[protein] + succinate + CO2. Oxygenase that can act as both a histone lysine demethylase and a ribosomal histidine hydroxylase. Is involved in the demethylation of trimethylated 'Lys-9' on histone H3 (H3K9me3), leading to an increase in ribosomal RNA expression. Also catalyzes the hydroxylation of 60S ribosomal protein L27a on 'His-39'. May play an important role in cell growth and survival. May be involved in ribosome biogenesis, most likely during the assembly process of pre-ribosomal particles. The sequence is that of Ribosomal oxygenase 2 from Mus musculus (Mouse).